A 393-amino-acid polypeptide reads, in one-letter code: uncharacterized protein (393 aa).

The protein belongs to the Gfo/Idh/MocA family.

This is an uncharacterized protein from Bacillus subtilis (strain 168).